The sequence spans 164 residues: Transcriptional regulator MraZ (164 aa).

SpoVT-AbrB domains lie at 7 to 60 (HFTN…EIDE) and 83 to 126 (SEIL…EPGR). The tract at residues 141–164 (LRKQLSSRPVAPDAQPPRPHGARE) is disordered. Over residues 154-164 (AQPPRPHGARE) the composition is skewed to pro residues.

It belongs to the MraZ family. As to quaternary structure, forms oligomers.

Its subcellular location is the cytoplasm. It is found in the nucleoid. The polypeptide is Transcriptional regulator MraZ (Beijerinckia indica subsp. indica (strain ATCC 9039 / DSM 1715 / NCIMB 8712)).